A 218-amino-acid chain; its full sequence is Probable transaldolase (218 aa).

Lys-83 functions as the Schiff-base intermediate with substrate in the catalytic mechanism.

The protein belongs to the transaldolase family. Type 3B subfamily.

The protein resides in the cytoplasm. It carries out the reaction D-sedoheptulose 7-phosphate + D-glyceraldehyde 3-phosphate = D-erythrose 4-phosphate + beta-D-fructose 6-phosphate. It participates in carbohydrate degradation; pentose phosphate pathway; D-glyceraldehyde 3-phosphate and beta-D-fructose 6-phosphate from D-ribose 5-phosphate and D-xylulose 5-phosphate (non-oxidative stage): step 2/3. Functionally, transaldolase is important for the balance of metabolites in the pentose-phosphate pathway. The sequence is that of Probable transaldolase from Kosmotoga olearia (strain ATCC BAA-1733 / DSM 21960 / TBF 19.5.1).